Here is a 196-residue protein sequence, read N- to C-terminus: Probable malonic semialdehyde reductase RutE (196 aa).

It belongs to the nitroreductase family. HadB/RutE subfamily. Requires FMN as cofactor.

The enzyme catalyses 3-hydroxypropanoate + NADP(+) = 3-oxopropanoate + NADPH + H(+). Its function is as follows. May reduce toxic product malonic semialdehyde to 3-hydroxypropionic acid, which is excreted. This chain is Probable malonic semialdehyde reductase RutE, found in Escherichia coli O7:K1 (strain IAI39 / ExPEC).